The following is a 399-amino-acid chain: Transmembrane protein 237 homolog (399 aa).

Positions 1 to 11 (MPPTSRPVPPP) are enriched in pro residues. The disordered stretch occupies residues 1 to 158 (MPPTSRPVPP…PHDKRNMPAK (158 aa)). Basic and acidic residues-rich tracts occupy residues 36-45 (NQQRRFRENN), 111-135 (EAAKHSREDPSGETVEVRRPNDPRR), and 144-158 (KSFRDPHDKRNMPAK). 4 consecutive transmembrane segments (helical) span residues 222–242 (IANIIQGFLAGISVMLAIFSF), 256–276 (MSLPIHAGFMVAFTVGLVSAI), 301–321 (GLITFIVWFVGLVSTLLCIQL), and 343–363 (VFNVLRALTSGLGFLLLAFKP).

The protein belongs to the TMEM237 family.

The protein localises to the membrane. The protein resides in the cell projection. It is found in the cilium. Functionally, component of the transition zone in primary cilia. Required for ciliogenesis. The protein is Transmembrane protein 237 homolog of Caenorhabditis elegans.